Here is a 373-residue protein sequence, read N- to C-terminus: D-alanine--D-alanine ligase (373 aa).

In terms of domain architecture, ATP-grasp spans 156–363 (KKLWSAAGLP…YPTLLATMVE (208 aa)). An ATP-binding site is contributed by 184–239 (LQRLGLPAYVKPARGGSSIGVSRVSSFDELPAAIAAARRHDPKVIVEAAINGRELE). Mg(2+)-binding residues include Asp-318, Glu-330, and Asn-332.

Belongs to the D-alanine--D-alanine ligase family. Mg(2+) is required as a cofactor. Mn(2+) serves as cofactor.

It localises to the cytoplasm. It catalyses the reaction 2 D-alanine + ATP = D-alanyl-D-alanine + ADP + phosphate + H(+). It participates in cell wall biogenesis; peptidoglycan biosynthesis. In terms of biological role, cell wall formation. In Mycobacterium ulcerans (strain Agy99), this protein is D-alanine--D-alanine ligase.